Reading from the N-terminus, the 137-residue chain is Small ribosomal subunit protein uS11 (137 aa).

The disordered stretch occupies residues 1–25 (MADRRRGAARGGAARPRRRERKNIP). The segment covering 15–25 (RPRRRERKNIP) has biased composition (basic residues).

Belongs to the universal ribosomal protein uS11 family. Part of the 30S ribosomal subunit. Interacts with proteins S7 and S18. Binds to IF-3.

Functionally, located on the platform of the 30S subunit, it bridges several disparate RNA helices of the 16S rRNA. Forms part of the Shine-Dalgarno cleft in the 70S ribosome. In Thermomicrobium roseum (strain ATCC 27502 / DSM 5159 / P-2), this protein is Small ribosomal subunit protein uS11.